The primary structure comprises 157 residues: UPF0225 protein PA1039 (157 aa).

The protein belongs to the UPF0225 family.

This is UPF0225 protein PA1039 from Pseudomonas aeruginosa (strain ATCC 15692 / DSM 22644 / CIP 104116 / JCM 14847 / LMG 12228 / 1C / PRS 101 / PAO1).